Consider the following 174-residue polypeptide: Larval cuticle protein LCP-22 (174 aa).

A signal peptide spans Met-1–Ala-16. One can recognise a Chitin-binding type R&amp;R domain in the interval Asp-82–Pro-153.

In terms of biological role, component of the cuticle of the larva of Bombyx mori. The polypeptide is Larval cuticle protein LCP-22 (LCP22) (Bombyx mori (Silk moth)).